The following is an 892-amino-acid chain: MKIPSGRCNMAAAMETEQLGVEIFETAECEEGNGESQDRPKLEPFYVERYSWSQLKKLLADTRKYHGYMMAKAPHDFMFVKRTDPDGPHSDRVYYLAMSGENRENTLFYSEIPKTINRAAVLMLSWKPLLDLFQATLDYGMYSREEELLRERKRIGTVGIAAYDYHPGSGTFLFQAGSGIYHIKDGGPHGFTQQPLRPNLVETSCPNIRMDPKLCPADPDWIAFIHSNDIWISNLVTREERRITYVHNELANMEEDPRSAGVATFVLQEEFDRYSGYWWCPQAERTPSGGKILRILYEENDESEVEIIHVTSPMLETRRADSFRYPKTGTANPKVTFKMSEIVVDAAGGIIDVIDKELVQPFEILFEGVEYIARAGWTPEGKHAWSILLDRSQTHLQIVLISPELFIPVEDDAMDRQRLIESVPDSVTPLIIYEETTDIWINIHDIFHVFPQTHEDEIEFIFASECKTGFRHLYKITSILKESKYKRSSGGLPAPSDFKCPIKEEITITSGEWEVLGRHGSNIWVDEARKLVYFEGTKDSPLEHHLYVTSYANPGEVVRLTDRGYSHSCCLSRHCDFFISKYSNQKNPHCVSLYKLSSPEDDPVHKTKEFWATILDSAGPLPDYTPPEIFSFESTTGFTLYGMLYKPHDLQPGKKYPTVLFIYGGPQVQLVNNRFKGVKYFRLNTLASLGYVVVVIDNRGSCHRGLKFEGAFKYKMGQIEIDDQVEGLQYLASQYDFIDLDRVGIHGWSYGGYLSLMALMQRSDIFRVAIAGAPVTLWIFYDTGYTERYMGHPDQNEQGYYLGSVAMQAEKFPSEPNRLLLLHGFLDENVHFAHTSILLSFLVRAGKPYDLQIYPQERHSIRVPESGEHYELHLLHYLQENLGSRIAALKVI.

Residues Ser749, Asp827, and His859 each act as charge relay system in the active site.

This sequence belongs to the peptidase S9B family. DPPIV subfamily. Homodimer. Forms a ternary complex with NLRP1, composed of a DPP8 homodimer, one full-length NLRP1 protein, and one cleaved C-terminus of NLRP1 (NACHT, LRR and PYD domains-containing protein 1, C-terminus). Forms a ternary complex with CARD8, composed of a DPP8 homodimer, one full-length NLRP1 protein, and one cleaved C-terminus of CARD8 (Caspase recruitment domain-containing protein 8, C-terminus). In the ternary complex, only one subunit of the DPP8 homodimer is bound to NLRP1 or CARD8.

The protein resides in the cytoplasm. It carries out the reaction Release of an N-terminal dipeptide, Xaa-Yaa-|-Zaa-, from a polypeptide, preferentially when Yaa is Pro, provided Zaa is neither Pro nor hydroxyproline.. Its activity is regulated as follows. Inhibited by zinc. Inhibited by the serine proteinase inhibitor 4-(2-aminoethyl)benzenesulphonyl fluoride (AEBSF), and by di-isopropylfluorophosphate. Specifically inhibited by isoindoline derivatives. Inhibited by Val-boroPro (Talabostat, PT-100), a non-selective inhibitor, which triggers pyroptosis in monocytes and macrophages. Its function is as follows. Dipeptidyl peptidase that cleaves off N-terminal dipeptides from proteins having a Pro or Ala residue at position 2. Acts as a key inhibitor of caspase-1-dependent monocyte and macrophage pyroptosis in resting cells by preventing activation of NLRP1 and CARD8. Sequesters the cleaved C-terminal part of NLRP1 and CARD8, which respectively constitute the active part of the NLRP1 and CARD8 inflammasomes, in a ternary complex, thereby preventing their oligomerization and activation. The dipeptidyl peptidase activity is required to suppress NLRP1 and CARD8; however, neither NLRP1 nor CARD8 are bona fide substrates of DPP8, suggesting the existence of substrate(s) required for NLRP1 and CARD8 inhibition. The chain is Dipeptidyl peptidase 8 from Mus musculus (Mouse).